A 252-amino-acid chain; its full sequence is Chitooligosaccharide deacetylase (252 aa).

Residues histidine 61 and histidine 125 each contribute to the Mg(2+) site.

It belongs to the YdjC deacetylase family. ChbG subfamily. Homodimer. The cofactor is Mg(2+).

It is found in the cytoplasm. The enzyme catalyses N,N'-diacetylchitobiose + H2O = N-acetyl-beta-D-glucosaminyl-(1-&gt;4)-D-glucosamine + acetate. It carries out the reaction diacetylchitobiose-6'-phosphate + H2O = N'-monoacetylchitobiose-6'-phosphate + acetate. Its pathway is glycan degradation; chitin degradation. In terms of biological role, involved in the degradation of chitin. ChbG is essential for growth on the acetylated chitooligosaccharides chitobiose and chitotriose but is dispensable for growth on cellobiose and chitosan dimer, the deacetylated form of chitobiose. Deacetylation of chitobiose-6-P and chitotriose-6-P is necessary for both the activation of the chb promoter by the regulatory protein ChbR and the hydrolysis of phosphorylated beta-glucosides by the phospho-beta-glucosidase ChbF. Catalyzes the removal of only one acetyl group from chitobiose-6-P to yield monoacetylchitobiose-6-P, the inducer of ChbR and the substrate of ChbF. In Salmonella schwarzengrund (strain CVM19633), this protein is Chitooligosaccharide deacetylase.